A 356-amino-acid chain; its full sequence is tRNA N6-adenosine threonylcarbamoyltransferase (356 aa).

Positions 122, 126, and 143 each coordinate a divalent metal cation. Substrate-binding positions include 143 to 147, Asp-175, Gly-190, Glu-194, and Asn-287; that span reads YVSGG. Asp-315 contributes to the a divalent metal cation binding site.

It belongs to the KAE1 / TsaD family. In terms of assembly, component of the EKC/KEOPS complex composed of at least BUD32, CGI121, GON7, KAE1 and PCC1; the whole complex dimerizes. It depends on a divalent metal cation as a cofactor.

It is found in the cytoplasm. It localises to the nucleus. The catalysed reaction is L-threonylcarbamoyladenylate + adenosine(37) in tRNA = N(6)-L-threonylcarbamoyladenosine(37) in tRNA + AMP + H(+). Component of the EKC/KEOPS complex that is required for the formation of a threonylcarbamoyl group on adenosine at position 37 (t(6)A37) in tRNAs that read codons beginning with adenine. The complex is probably involved in the transfer of the threonylcarbamoyl moiety of threonylcarbamoyl-AMP (TC-AMP) to the N6 group of A37. KAE1 likely plays a direct catalytic role in this reaction, but requires other protein(s) of the complex to fulfill this activity. The EKC/KEOPS complex also promotes both telomere uncapping and telomere elongation. The complex is required for efficient recruitment of transcriptional coactivators. In Chaetomium globosum (strain ATCC 6205 / CBS 148.51 / DSM 1962 / NBRC 6347 / NRRL 1970) (Soil fungus), this protein is tRNA N6-adenosine threonylcarbamoyltransferase.